Reading from the N-terminus, the 366-residue chain is Phospho-N-acetylmuramoyl-pentapeptide-transferase (366 aa).

10 helical membrane passes run 3 to 23, 54 to 74, 80 to 100, 120 to 140, 161 to 181, 197 to 217, 238 to 258, 262 to 282, 288 to 308, and 341 to 361; these read QIFI…PVLI, GIAV…VGLV, PGVS…LGFA, LVGQ…FPNA, IAIG…YLVI, LASG…FWQF, LSML…WNAA, IFMG…LSVT, LMIL…IQVV, and FWLL…AEWL.

Belongs to the glycosyltransferase 4 family. MraY subfamily. It depends on Mg(2+) as a cofactor.

Its subcellular location is the cell membrane. The enzyme catalyses UDP-N-acetyl-alpha-D-muramoyl-L-alanyl-gamma-D-glutamyl-meso-2,6-diaminopimeloyl-D-alanyl-D-alanine + di-trans,octa-cis-undecaprenyl phosphate = di-trans,octa-cis-undecaprenyl diphospho-N-acetyl-alpha-D-muramoyl-L-alanyl-D-glutamyl-meso-2,6-diaminopimeloyl-D-alanyl-D-alanine + UMP. It functions in the pathway cell wall biogenesis; peptidoglycan biosynthesis. Functionally, catalyzes the initial step of the lipid cycle reactions in the biosynthesis of the cell wall peptidoglycan: transfers peptidoglycan precursor phospho-MurNAc-pentapeptide from UDP-MurNAc-pentapeptide onto the lipid carrier undecaprenyl phosphate, yielding undecaprenyl-pyrophosphoryl-MurNAc-pentapeptide, known as lipid I. The sequence is that of Phospho-N-acetylmuramoyl-pentapeptide-transferase from Corynebacterium jeikeium (strain K411).